Reading from the N-terminus, the 654-residue chain is Tumor necrosis factor alpha-induced protein 2 (654 aa).

Disordered regions lie at residues 1–38 (MSEASSEDLVPPLEAGAAPYREEEEAAKKKKEKKKKSK) and 50–78 (GKKKKGQPSSAEPEDAAGSRQGLDGPPPT). Positions 28 to 38 (KKKKEKKKKSK) are enriched in basic residues.

Belongs to the SEC6 family.

In terms of biological role, may play a role as a mediator of inflammation and angiogenesis. The sequence is that of Tumor necrosis factor alpha-induced protein 2 (TNFAIP2) from Homo sapiens (Human).